A 105-amino-acid polypeptide reads, in one-letter code: Large ribosomal subunit protein uL24 (105 aa).

The interval 1–25 (MHIKKGDNVKVIAGKDKGKEGKVVS) is disordered.

The protein belongs to the universal ribosomal protein uL24 family. In terms of assembly, part of the 50S ribosomal subunit.

Its function is as follows. One of two assembly initiator proteins, it binds directly to the 5'-end of the 23S rRNA, where it nucleates assembly of the 50S subunit. One of the proteins that surrounds the polypeptide exit tunnel on the outside of the subunit. The sequence is that of Large ribosomal subunit protein uL24 from Staphylococcus saprophyticus subsp. saprophyticus (strain ATCC 15305 / DSM 20229 / NCIMB 8711 / NCTC 7292 / S-41).